A 257-amino-acid chain; its full sequence is DNA repair protein RecO (257 aa).

This sequence belongs to the RecO family.

Its function is as follows. Involved in DNA repair and RecF pathway recombination. The chain is DNA repair protein RecO from Streptococcus thermophilus (strain CNRZ 1066).